Here is a 441-residue protein sequence, read N- to C-terminus: UDP-N-acetylglucosamine--N-acetylmuramyl-(pentapeptide) pyrophosphoryl-undecaprenol N-acetylglucosamine transferase (441 aa).

Residues 28-30, Asn140, Arg176, Ser204, Ile257, and Gln302 contribute to the UDP-N-acetyl-alpha-D-glucosamine site; that span reads TGG.

This sequence belongs to the glycosyltransferase 28 family. MurG subfamily.

Its subcellular location is the cell inner membrane. It catalyses the reaction di-trans,octa-cis-undecaprenyl diphospho-N-acetyl-alpha-D-muramoyl-L-alanyl-D-glutamyl-meso-2,6-diaminopimeloyl-D-alanyl-D-alanine + UDP-N-acetyl-alpha-D-glucosamine = di-trans,octa-cis-undecaprenyl diphospho-[N-acetyl-alpha-D-glucosaminyl-(1-&gt;4)]-N-acetyl-alpha-D-muramoyl-L-alanyl-D-glutamyl-meso-2,6-diaminopimeloyl-D-alanyl-D-alanine + UDP + H(+). It functions in the pathway cell wall biogenesis; peptidoglycan biosynthesis. In terms of biological role, cell wall formation. Catalyzes the transfer of a GlcNAc subunit on undecaprenyl-pyrophosphoryl-MurNAc-pentapeptide (lipid intermediate I) to form undecaprenyl-pyrophosphoryl-MurNAc-(pentapeptide)GlcNAc (lipid intermediate II). This is UDP-N-acetylglucosamine--N-acetylmuramyl-(pentapeptide) pyrophosphoryl-undecaprenol N-acetylglucosamine transferase from Xanthomonas oryzae pv. oryzae (strain MAFF 311018).